The chain runs to 92 residues: DNA-directed RNA polymerase subunit omega (92 aa).

Belongs to the RNA polymerase subunit omega family. In terms of assembly, the RNAP catalytic core consists of 2 alpha, 1 beta, 1 beta' and 1 omega subunit. When a sigma factor is associated with the core the holoenzyme is formed, which can initiate transcription.

It carries out the reaction RNA(n) + a ribonucleoside 5'-triphosphate = RNA(n+1) + diphosphate. In terms of biological role, promotes RNA polymerase assembly. Latches the N- and C-terminal regions of the beta' subunit thereby facilitating its interaction with the beta and alpha subunits. The polypeptide is DNA-directed RNA polymerase subunit omega (Shewanella frigidimarina (strain NCIMB 400)).